The chain runs to 361 residues: Protein RecA (361 aa).

68-75 (GPESSGKT) serves as a coordination point for ATP. Positions 342-361 (PEGAKENISAKDDVAVDTKE) are disordered. Residues 344 to 361 (GAKENISAKDDVAVDTKE) are compositionally biased toward basic and acidic residues.

Belongs to the RecA family.

It is found in the cytoplasm. Can catalyze the hydrolysis of ATP in the presence of single-stranded DNA, the ATP-dependent uptake of single-stranded DNA by duplex DNA, and the ATP-dependent hybridization of homologous single-stranded DNAs. It interacts with LexA causing its activation and leading to its autocatalytic cleavage. The polypeptide is Protein RecA (Clostridium beijerinckii (strain ATCC 51743 / NCIMB 8052) (Clostridium acetobutylicum)).